The chain runs to 509 residues: Maturase K (509 aa).

It belongs to the intron maturase 2 family. MatK subfamily.

The protein resides in the plastid. It is found in the chloroplast. Usually encoded in the trnK tRNA gene intron. Probably assists in splicing its own and other chloroplast group II introns. The chain is Maturase K from Metasequoia glyptostroboides (Dawn redwood).